The sequence spans 334 residues: Ornithine carbamoyltransferase, catabolic (334 aa).

Carbamoyl phosphate is bound by residues 57-60, Gln84, Arg108, and 135-138; these read STRT and HPTQ. L-ornithine contacts are provided by residues Asn169, Asp233, and 237–238; that span reads SM. Residues 275–276 and Arg320 each bind carbamoyl phosphate; that span reads CL.

The protein belongs to the aspartate/ornithine carbamoyltransferase superfamily. OTCase family.

Its subcellular location is the cytoplasm. The catalysed reaction is carbamoyl phosphate + L-ornithine = L-citrulline + phosphate + H(+). The protein operates within amino-acid degradation; L-arginine degradation via ADI pathway; carbamoyl phosphate from L-arginine: step 2/2. In terms of biological role, reversibly catalyzes the transfer of the carbamoyl group from carbamoyl phosphate (CP) to the N(epsilon) atom of ornithine (ORN) to produce L-citrulline. The protein is Ornithine carbamoyltransferase, catabolic (arcB) of Salmonella typhimurium (strain LT2 / SGSC1412 / ATCC 700720).